The sequence spans 471 residues: FERM domain-containing protein 8 (471 aa).

Disordered stretches follow at residues 1–23, 381–416, and 451–471; these read MEGD…RGSV, AATG…RRQN, and TRQA…LEQG. The region spanning 31 to 382 is the FERM domain; it reads QDLLVYLAND…ELRSVSESAA (352 aa).

It is found in the cytoplasm. Its subcellular location is the cytosol. The protein resides in the cell membrane. In terms of biological role, promotes the cell surface stability of rhomboid 5 homologs and prevents their degradation via the endolysosomal pathway. By acting on rhomboid 5 homologs, involved in ADAM17-mediated ligand shedding. Negatively regulates the Wnt/beta-catenin signaling pathway. In Danio rerio (Zebrafish), this protein is FERM domain-containing protein 8 (frmd8).